We begin with the raw amino-acid sequence, 288 residues long: Energy-coupling factor transporter ATP-binding protein EcfA2 (288 aa).

Positions 2-244 constitute an ABC transporter domain; sequence IKFEKVNYTY…VDFLKAHELG (243 aa). 39 to 46 provides a ligand contact to ATP; sequence GHTGSGKS.

The protein belongs to the ABC transporter superfamily. Energy-coupling factor EcfA family. As to quaternary structure, forms a stable energy-coupling factor (ECF) transporter complex composed of 2 membrane-embedded substrate-binding proteins (S component), 2 ATP-binding proteins (A component) and 2 transmembrane proteins (T component).

The protein localises to the cell membrane. Its function is as follows. ATP-binding (A) component of a common energy-coupling factor (ECF) ABC-transporter complex. Unlike classic ABC transporters this ECF transporter provides the energy necessary to transport a number of different substrates. The protein is Energy-coupling factor transporter ATP-binding protein EcfA2 of Lactococcus lactis subsp. lactis (strain IL1403) (Streptococcus lactis).